The following is a 141-amino-acid chain: Putative pre-16S rRNA nuclease (141 aa).

The protein belongs to the YqgF nuclease family.

The protein resides in the cytoplasm. In terms of biological role, could be a nuclease involved in processing of the 5'-end of pre-16S rRNA. The chain is Putative pre-16S rRNA nuclease from Cupriavidus taiwanensis (strain DSM 17343 / BCRC 17206 / CCUG 44338 / CIP 107171 / LMG 19424 / R1) (Ralstonia taiwanensis (strain LMG 19424)).